Here is a 339-residue protein sequence, read N- to C-terminus: Deubiquitinase and deneddylase Dub2 (339 aa).

The helical transmembrane segment at 36-56 threads the bilayer; that stretch reads IIIALFLIVISCGLILCAYTF. Residues His-203, Asp-220, and Cys-282 contribute to the active site.

Belongs to the peptidase C48 family.

It is found in the secreted. The protein resides in the host cell. The protein localises to the membrane. Its function is as follows. Effector proteins function to alter host cell physiology and promote bacterial survival in host tissues. This protease possesses deubiquitinating and deneddylating activities. This is Deubiquitinase and deneddylase Dub2 (cdu2) from Chlamydia trachomatis serovar B (strain Jali20/OT).